A 319-amino-acid chain; its full sequence is Beta-ketoacyl-[acyl-carrier-protein] synthase III (319 aa).

Active-site residues include C113 and H246. Residues 247-251 (QANIR) form an ACP-binding region. N276 is an active-site residue.

Belongs to the thiolase-like superfamily. FabH family. Homodimer.

Its subcellular location is the cytoplasm. The catalysed reaction is malonyl-[ACP] + acetyl-CoA + H(+) = 3-oxobutanoyl-[ACP] + CO2 + CoA. It participates in lipid metabolism; fatty acid biosynthesis. Catalyzes the condensation reaction of fatty acid synthesis by the addition to an acyl acceptor of two carbons from malonyl-ACP. Catalyzes the first condensation reaction which initiates fatty acid synthesis and may therefore play a role in governing the total rate of fatty acid production. Possesses both acetoacetyl-ACP synthase and acetyl transacylase activities. Its substrate specificity determines the biosynthesis of branched-chain and/or straight-chain of fatty acids. In Ehrlichia chaffeensis (strain ATCC CRL-10679 / Arkansas), this protein is Beta-ketoacyl-[acyl-carrier-protein] synthase III.